The chain runs to 561 residues: Acyl-CoA ligase ppsA (561 aa).

N-linked (GlcNAc...) asparagine glycosylation is present at Asn-21. The chain crosses the membrane as a helical span at residues 71-91 (SILYPALFLAIVGVGAVYMGA). 203–214 (MFATSGTSGLPK) is a binding site for AMP. Asn-396 carries an N-linked (GlcNAc...) asparagine glycan. The tract at residues 462–540 (ELEAELAQHP…DSIPRNSGGK (79 aa)) is AMP-binding.

Belongs to the ATP-dependent AMP-binding enzyme family.

It is found in the membrane. It carries out the reaction acetate + ATP + CoA = acetyl-CoA + ADP + phosphate. The catalysed reaction is propanoate + ATP + CoA = propanoyl-CoA + AMP + diphosphate. Its pathway is secondary metabolite biosynthesis. Acyl-CoA ligase; part of the gene cluster that mediates the biosynthesis of 2,4'-dihydroxy-3'-methoxypropiophenone. The first step of the pathway is the conversion of acetate into acetyl-CoA by the acyl-CoA ligase ppsA. Acetyl-CoA is then used as a starter unit by the polyketide synthase ppsB and condensed with 4 malonyl-CoA unit to produce the pentaketide backbone. During polyketide extension, the polykedite chain is probably reduced and dehydrated by the KR and PT domains, respectively. O-methylation seems to be catalyzed by an unknown methyltransferase rather than by the CMeT domain of ppsB. Two hydroxylations and one further decarboxylation step catalyzed by yet unknown enzymes are then required to yield 4'-hydroxy-3'-methoxypropiophenone. PpsC functions as a carrier protein to transport 4'-hydroxy-3'-methoxypropiophenone to a specific cell compartment in which 4'-hydroxy-3'-methoxypropiophenone is hydroxylated to 2,4'-dihydroxy-3'-methoxypropiophenone by a still to be identified enzyme. The sequence is that of Acyl-CoA ligase ppsA from Aspergillus oryzae (strain ATCC 42149 / RIB 40) (Yellow koji mold).